The chain runs to 166 residues: NAD(P)H-quinone oxidoreductase subunit I, chloroplastic (166 aa).

4Fe-4S ferredoxin-type domains are found at residues G55–K84 and L95–E124. [4Fe-4S] cluster contacts are provided by C64, C67, C70, C74, C104, C107, C110, and C114.

Belongs to the complex I 23 kDa subunit family. In terms of assembly, NDH is composed of at least 16 different subunits, 5 of which are encoded in the nucleus. [4Fe-4S] cluster is required as a cofactor.

The protein localises to the plastid. The protein resides in the chloroplast thylakoid membrane. The catalysed reaction is a plastoquinone + NADH + (n+1) H(+)(in) = a plastoquinol + NAD(+) + n H(+)(out). It carries out the reaction a plastoquinone + NADPH + (n+1) H(+)(in) = a plastoquinol + NADP(+) + n H(+)(out). In terms of biological role, NDH shuttles electrons from NAD(P)H:plastoquinone, via FMN and iron-sulfur (Fe-S) centers, to quinones in the photosynthetic chain and possibly in a chloroplast respiratory chain. The immediate electron acceptor for the enzyme in this species is believed to be plastoquinone. Couples the redox reaction to proton translocation, and thus conserves the redox energy in a proton gradient. In Chaetymenia peduncularis (Daisy), this protein is NAD(P)H-quinone oxidoreductase subunit I, chloroplastic.